The chain runs to 1232 residues: DNA-directed RNA polymerase subunit beta (1232 aa).

Residues 1170 to 1232 (SVDEDADELE…LDLDDFGDEH (63 aa)) are disordered. The span at 1171–1180 (VDEDADELEV) shows a compositional bias: acidic residues. A compositionally biased stretch (basic and acidic residues) spans 1189 to 1198 (PEEKEEKEKE). Residues 1199–1232 (DSDEYDDLREEDVEPDLEELSLDDLDLDDFGDEH) show a composition bias toward acidic residues.

The protein belongs to the RNA polymerase beta chain family. The RNAP catalytic core consists of 2 alpha, 1 beta, 1 beta' and 1 omega subunit. When a sigma factor is associated with the core the holoenzyme is formed, which can initiate transcription.

The catalysed reaction is RNA(n) + a ribonucleoside 5'-triphosphate = RNA(n+1) + diphosphate. DNA-dependent RNA polymerase catalyzes the transcription of DNA into RNA using the four ribonucleoside triphosphates as substrates. The polypeptide is DNA-directed RNA polymerase subunit beta (Clostridium botulinum (strain Kyoto / Type A2)).